The primary structure comprises 506 residues: Maturase K (506 aa).

The protein belongs to the intron maturase 2 family. MatK subfamily.

It is found in the plastid. The protein resides in the chloroplast. Its function is as follows. Usually encoded in the trnK tRNA gene intron. Probably assists in splicing its own and other chloroplast group II introns. The protein is Maturase K of Atractylodes lancea (Atractylodes japonica).